Here is an 866-residue protein sequence, read N- to C-terminus: Protein translocase subunit SecA (866 aa).

ATP-binding positions include glutamine 87, 105–109, and aspartate 514; that span reads GEGKT. The interval 819 to 858 is disordered; it reads VSPIGTPSSEGGGETSGADTYSNKKIGRNDPCPCGSGKKY. Residues cysteine 850, cysteine 852, cysteine 861, and cysteine 862 each contribute to the Zn(2+) site.

This sequence belongs to the SecA family. Monomer and homodimer. Part of the essential Sec protein translocation apparatus which comprises SecA, SecYEG and auxiliary proteins SecDF. Other proteins may also be involved. Zn(2+) serves as cofactor.

The protein localises to the cell inner membrane. It is found in the cytoplasm. It carries out the reaction ATP + H2O + cellular proteinSide 1 = ADP + phosphate + cellular proteinSide 2.. Part of the Sec protein translocase complex. Interacts with the SecYEG preprotein conducting channel. Has a central role in coupling the hydrolysis of ATP to the transfer of proteins into and across the cell membrane, serving as an ATP-driven molecular motor driving the stepwise translocation of polypeptide chains across the membrane. The polypeptide is Protein translocase subunit SecA (Elusimicrobium minutum (strain Pei191)).